A 159-amino-acid polypeptide reads, in one-letter code: Protein-export protein SecB (159 aa).

The protein belongs to the SecB family. Homotetramer, a dimer of dimers. One homotetramer interacts with 1 SecA dimer.

It is found in the cytoplasm. In terms of biological role, one of the proteins required for the normal export of preproteins out of the cell cytoplasm. It is a molecular chaperone that binds to a subset of precursor proteins, maintaining them in a translocation-competent state. It also specifically binds to its receptor SecA. In Nitrobacter hamburgensis (strain DSM 10229 / NCIMB 13809 / X14), this protein is Protein-export protein SecB.